The chain runs to 145 residues: Large ribosomal subunit protein uL16 (145 aa).

This sequence belongs to the universal ribosomal protein uL16 family. In terms of assembly, part of the 50S ribosomal subunit.

Binds 23S rRNA and is also seen to make contacts with the A and possibly P site tRNAs. This chain is Large ribosomal subunit protein uL16, found in Exiguobacterium sibiricum (strain DSM 17290 / CCUG 55495 / CIP 109462 / JCM 13490 / 255-15).